Here is a 1601-residue protein sequence, read N- to C-terminus: PH and SEC7 domain-containing protein (1601 aa).

Residues 1 to 340 (MSEELKVVLR…TGDLILNLSR (340 aa)) are mediates regulation of axon branching and microtubule organization. One can recognise a PDZ domain in the interval 6–88 (KVVLRRSEQH…LVTLELKRDP (83 aa)). Disordered stretches follow at residues 113–192 (NIYD…SSTK), 211–322 (TSPT…PAKA), 339–440 (SRTP…SLTN), 459–657 (LEED…SSSG), 737–780 (NSSL…SETA), 872–965 (QQQQ…LLSC), and 1040–1126 (QQLK…SDVE). Residues 118-128 (HSSSTNSSPNH) are compositionally biased toward polar residues. Positions 166 to 191 (ASGSTTTTTTATHTHSHSRNSSASST) are enriched in low complexity. The segment covering 283–297 (QSLQHSNSYSGSPVT) has biased composition (polar residues). Basic and acidic residues predominate over residues 300–311 (RFADREPEREPE). The Microtubule elimination domain (MTED); Binds tubulin and blocks microtubule polymerization signature appears at 323-340 (PRFEAYMMTGDLILNLSR). A compositionally biased stretch (polar residues) spans 339–348 (SRTPQTSNPL). Positions 353–362 (KKIDSLRDSP) are enriched in basic and acidic residues. 3 stretches are compositionally biased toward low complexity: residues 382-399 (SSPT…TSSD), 409-424 (QKQQ…QQQQ), and 468-487 (QRQQ…YEYY). A compositionally biased stretch (acidic residues) spans 488 to 505 (QNEDELEEQEEVEEEREE). The segment covering 510–519 (YDITNIETYQ) has biased composition (polar residues). Over residues 526-557 (DDDDSDRQCLVDDDDDDDAYDDEENDAGDEDY) the composition is skewed to acidic residues. Composition is skewed to polar residues over residues 558–567 (STNSLGSGSA) and 617–630 (TSFS…SLST). Residues 640-657 (SVPTSPEPSSLVPESSSG) are compositionally biased toward low complexity. Residues 737 to 747 (NSSLASNNNEG) show a composition bias toward polar residues. 4 stretches are compositionally biased toward low complexity: residues 752-780 (NRSS…SETA), 872-942 (QQQQ…QQQQ), 949-965 (GGQV…LLSC), and 1040-1052 (QQLK…QQQQ). A mediates association to the membrane and rescricts the microtubule-inhibiting activity to the cell cortex region spans residues 894 to 1601 (SSSPQHSAVG…PTNRKEKKKK (708 aa)). Basic and acidic residues predominate over residues 1053–1071 (QRERERDRDRDREQSEHKV). One can recognise an SEC7 domain in the interval 1125–1291 (VESLHSYHYS…KSLYQAIKTK (167 aa)). One can recognise a PH domain in the interval 1332–1445 (VEYKKGYVMR…WVETINYVCA (114 aa)). Residues 1544–1601 (LELQAQQPSPASHEEEADTFPVGTTACTPPTPQSINQKDQQKEQQQQQPTNRKEKKKK) are disordered. Over residues 1568 to 1579 (TACTPPTPQSIN) the composition is skewed to polar residues.

The protein belongs to the PSD family. Interacts (via MTED motif) with tubulin. In terms of tissue distribution, expressed in the head (at protein level).

It localises to the cell projection. The protein localises to the axon. It is found in the cytoplasm. Its subcellular location is the cell membrane. The protein resides in the cell cortex. Functionally, guanine nucleotide exchange factor for Arf6. Regulates axon growth and branching by inhibiting microtubule polymerisation at the cortex. Together with shot, promotes axonal microtubule bundle integrity. Required for normal ethanol-induced tolerance and preference. Probably by activating Arf6, counteracts ethanol-induced sedation. In Drosophila melanogaster (Fruit fly), this protein is PH and SEC7 domain-containing protein.